The following is a 51-amino-acid chain: Large ribosomal subunit protein eL39 (51 aa).

The protein belongs to the eukaryotic ribosomal protein eL39 family.

The sequence is that of Large ribosomal subunit protein eL39 from Pyrobaculum islandicum (strain DSM 4184 / JCM 9189 / GEO3).